The primary structure comprises 234 residues: Viral Fc-gamma receptor-like protein IR11 (234 aa).

Residues 1-23 (MQTYSTPLTLVIVTSLFLFTTQG) form the signal peptide. The region spanning 24-122 (SSSNAVEPTK…VKDTGVYLLQ (99 aa)) is the Ig-like V-type domain. Residues 24-182 (SSSNAVEPTK…DLKRQWSGLS (159 aa)) lie on the Extracellular side of the membrane. N-linked (GlcNAc...) asparagine; by host glycosylation is found at Asn-57, Asn-105, and Asn-110. A helical membrane pass occupies residues 183 to 203 (LHCAWVSGMMIFVGALVICFL). The Cytoplasmic portion of the chain corresponds to 204 to 234 (RSQRIGEQDAEHLRTDLDTEPLLLTVDGDLQ).

Belongs to the RL11 family.

The protein localises to the membrane. The protein is Viral Fc-gamma receptor-like protein IR11 of Homo sapiens (Human).